Here is a 302-residue protein sequence, read N- to C-terminus: Sulfate adenylyltransferase subunit 2 (302 aa).

It belongs to the PAPS reductase family. CysD subfamily. Heterodimer composed of CysD, the smaller subunit, and CysN.

The enzyme catalyses sulfate + ATP + H(+) = adenosine 5'-phosphosulfate + diphosphate. Its pathway is sulfur metabolism; hydrogen sulfide biosynthesis; sulfite from sulfate: step 1/3. Its function is as follows. With CysN forms the ATP sulfurylase (ATPS) that catalyzes the adenylation of sulfate producing adenosine 5'-phosphosulfate (APS) and diphosphate, the first enzymatic step in sulfur assimilation pathway. APS synthesis involves the formation of a high-energy phosphoric-sulfuric acid anhydride bond driven by GTP hydrolysis by CysN coupled to ATP hydrolysis by CysD. This Citrobacter koseri (strain ATCC BAA-895 / CDC 4225-83 / SGSC4696) protein is Sulfate adenylyltransferase subunit 2.